Here is a 325-residue protein sequence, read N- to C-terminus: Transaldolase (325 aa).

The Schiff-base intermediate with substrate role is filled by Lys-125.

Belongs to the transaldolase family. Type 2 subfamily.

The protein resides in the cytoplasm. It carries out the reaction D-sedoheptulose 7-phosphate + D-glyceraldehyde 3-phosphate = D-erythrose 4-phosphate + beta-D-fructose 6-phosphate. The protein operates within carbohydrate degradation; pentose phosphate pathway; D-glyceraldehyde 3-phosphate and beta-D-fructose 6-phosphate from D-ribose 5-phosphate and D-xylulose 5-phosphate (non-oxidative stage): step 2/3. Its function is as follows. Transaldolase is important for the balance of metabolites in the pentose-phosphate pathway. This is Transaldolase from Campylobacter jejuni subsp. doylei (strain ATCC BAA-1458 / RM4099 / 269.97).